The following is a 116-amino-acid chain: Large ribosomal subunit protein uL18 (116 aa).

Belongs to the universal ribosomal protein uL18 family. As to quaternary structure, part of the 50S ribosomal subunit; part of the 5S rRNA/L5/L18/L25 subcomplex. Contacts the 5S and 23S rRNAs.

Functionally, this is one of the proteins that bind and probably mediate the attachment of the 5S RNA into the large ribosomal subunit, where it forms part of the central protuberance. This Teredinibacter turnerae (strain ATCC 39867 / T7901) protein is Large ribosomal subunit protein uL18.